The chain runs to 355 residues: Holliday junction branch migration complex subunit RuvB (355 aa).

Residues 4 to 190 (TDKLAAERII…FGIVARLEFY (187 aa)) form a large ATPase domain (RuvB-L) region. ATP-binding positions include leucine 29, arginine 30, glycine 71, lysine 74, threonine 75, threonine 76, 137 to 139 (EDY), arginine 180, tyrosine 190, and arginine 227. Residue threonine 75 participates in Mg(2+) binding. Positions 191 to 261 (DADQLARIVR…VADAALAMLD (71 aa)) are small ATPAse domain (RuvB-S). Residues 264 to 355 (PVGFDLMDRK…RGMWDTPAGK (92 aa)) form a head domain (RuvB-H) region. Positions 300, 319, and 324 each coordinate DNA.

The protein belongs to the RuvB family. Homohexamer. Forms an RuvA(8)-RuvB(12)-Holliday junction (HJ) complex. HJ DNA is sandwiched between 2 RuvA tetramers; dsDNA enters through RuvA and exits via RuvB. An RuvB hexamer assembles on each DNA strand where it exits the tetramer. Each RuvB hexamer is contacted by two RuvA subunits (via domain III) on 2 adjacent RuvB subunits; this complex drives branch migration. In the full resolvosome a probable DNA-RuvA(4)-RuvB(12)-RuvC(2) complex forms which resolves the HJ.

Its subcellular location is the cytoplasm. The enzyme catalyses ATP + H2O = ADP + phosphate + H(+). The RuvA-RuvB-RuvC complex processes Holliday junction (HJ) DNA during genetic recombination and DNA repair, while the RuvA-RuvB complex plays an important role in the rescue of blocked DNA replication forks via replication fork reversal (RFR). RuvA specifically binds to HJ cruciform DNA, conferring on it an open structure. The RuvB hexamer acts as an ATP-dependent pump, pulling dsDNA into and through the RuvAB complex. RuvB forms 2 homohexamers on either side of HJ DNA bound by 1 or 2 RuvA tetramers; 4 subunits per hexamer contact DNA at a time. Coordinated motions by a converter formed by DNA-disengaged RuvB subunits stimulates ATP hydrolysis and nucleotide exchange. Immobilization of the converter enables RuvB to convert the ATP-contained energy into a lever motion, pulling 2 nucleotides of DNA out of the RuvA tetramer per ATP hydrolyzed, thus driving DNA branch migration. The RuvB motors rotate together with the DNA substrate, which together with the progressing nucleotide cycle form the mechanistic basis for DNA recombination by continuous HJ branch migration. Branch migration allows RuvC to scan DNA until it finds its consensus sequence, where it cleaves and resolves cruciform DNA. This is Holliday junction branch migration complex subunit RuvB from Burkholderia ambifaria (strain ATCC BAA-244 / DSM 16087 / CCUG 44356 / LMG 19182 / AMMD) (Burkholderia cepacia (strain AMMD)).